A 158-amino-acid chain; its full sequence is MAEVVEVLVPGGKATAGPPLGPALGPLGINVKAVVDEINAKTASFNGMQVPVKVEVNDKKQFTVTVGIPPTTALIKKEANIEKGSAEPNAKVAGNLPFEAAVRIAKMKLEGMLSYELKTATKEVVGTCVSMGVNVDGKRPKEVLADIAAGKYDSVLLK.

This sequence belongs to the universal ribosomal protein uL11 family. In terms of assembly, part of the ribosomal stalk of the 50S ribosomal subunit. Interacts with L10 and the large rRNA to form the base of the stalk. L10 forms an elongated spine to which L12 dimers bind in a sequential fashion forming a multimeric L10(L12)X complex.

Functionally, forms part of the ribosomal stalk which helps the ribosome interact with GTP-bound translation factors. The sequence is that of Large ribosomal subunit protein uL11 from Methanoregula boonei (strain DSM 21154 / JCM 14090 / 6A8).